A 121-amino-acid chain; its full sequence is Large ribosomal subunit protein bL20 (121 aa).

This sequence belongs to the bacterial ribosomal protein bL20 family.

Its function is as follows. Binds directly to 23S ribosomal RNA and is necessary for the in vitro assembly process of the 50S ribosomal subunit. It is not involved in the protein synthesizing functions of that subunit. The protein is Large ribosomal subunit protein bL20 of Polynucleobacter asymbioticus (strain DSM 18221 / CIP 109841 / QLW-P1DMWA-1) (Polynucleobacter necessarius subsp. asymbioticus).